The chain runs to 309 residues: L-2-keto-3-deoxyarabonate dehydratase (309 aa).

Catalysis depends on lysine 171, which acts as the Schiff-base intermediate with substrate.

The protein belongs to the DapA family. Homodimer.

The enzyme catalyses 2-dehydro-3-deoxy-L-arabinonate = 2,5-dioxopentanoate + H2O. Its function is as follows. Catalyzes the dehydration of L-2-keto-3-deoxyarabonate (L-KDA) to alpha-ketoglutaric semialdehyde (alphaKGSA). Is involved in a degradation pathway of L-arabinose that allows A.brasilense to grow on L-arabinose as a sole carbon source. This Azospirillum brasilense protein is L-2-keto-3-deoxyarabonate dehydratase (araD).